Here is a 1491-residue protein sequence, read N- to C-terminus: Chromosome partition protein MukB (1491 aa).

ATP is bound at residue 34–41 (GGNGAGKS). Coiled-coil stretches lie at residues 302-450 (LIEQ…LKAE), 490-600 (ARSE…RFES), 781-806 (RAAR…AKAS), 836-1109 (EQAL…DLRT), and 1210-1239 (VEAI…ISSD). Residues 667–784 (PGGSNDPRLK…AIPLFGRAAR (118 aa)) form a flexible hinge region. A disordered region spans residues 1059-1080 (QRRRDELQERLHTSRSRKSEYE).

This sequence belongs to the SMC family. MukB subfamily. Homodimerization via its hinge domain. Binds to DNA via its C-terminal region. Interacts, and probably forms a ternary complex, with MukE and MukF via its C-terminal region. The complex formation is stimulated by calcium or magnesium. Interacts with tubulin-related protein FtsZ.

The protein localises to the cytoplasm. The protein resides in the nucleoid. In terms of biological role, plays a central role in chromosome condensation, segregation and cell cycle progression. Functions as a homodimer, which is essential for chromosome partition. Involved in negative DNA supercoiling in vivo, and by this means organize and compact chromosomes. May achieve or facilitate chromosome segregation by condensation DNA from both sides of a centrally located replisome during cell division. This chain is Chromosome partition protein MukB, found in Vibrio cholerae serotype O1 (strain ATCC 39315 / El Tor Inaba N16961).